The chain runs to 307 residues: Putative oxidoreductase YceM (307 aa).

Belongs to the Gfo/Idh/MocA family.

This Salmonella typhimurium (strain LT2 / SGSC1412 / ATCC 700720) protein is Putative oxidoreductase YceM (yceM).